A 393-amino-acid polypeptide reads, in one-letter code: MTRIGTPLSPTATRVLLCGCGELGKEVVIELQRLGVEVIAVDRYANAPAMQVAHRSHVVNMLDGVALRAVIEAEKPHYIVPEIEAIATATLVELENEGFTVVPTARATQLTMNREGIRRLAAEELDLPTSPYHFADTYEDYAKAVADLGYPCVVKPVMSSSGKGQSLLRSDADLQKSWDYAQEGGRAGKGRVIVEGFIDFEYEITLLTVRHVGGTTFLEPVGHRQEKGDYQESWQPQAMSPKALAESQRVAKAVTDALGGRGLFGVELFVKGDQVWFSEVSPRPHDTGLVTLISQDLSQFALHARAILGLPIPVVRQFGPSASAVILPEGQSQQTSFANLGAALSEPDTAIRLFGKPEINGTRRMGVCLARDESVELARAKATRASQAVKVEF.

Residues 22-23 (EL) and E82 contribute to the N(1)-(5-phospho-beta-D-ribosyl)glycinamide site. ATP-binding positions include R114, K155, 160-165 (SSGKGQ), 195-198 (EGFI), and E203. Residues 119–308 (RLAAEELDLP…QFALHARAIL (190 aa)) enclose the ATP-grasp domain. E267 and E279 together coordinate Mg(2+). Residues D286, K356, and 363 to 364 (RR) each bind N(1)-(5-phospho-beta-D-ribosyl)glycinamide.

It belongs to the PurK/PurT family. In terms of assembly, homodimer.

The enzyme catalyses N(1)-(5-phospho-beta-D-ribosyl)glycinamide + formate + ATP = N(2)-formyl-N(1)-(5-phospho-beta-D-ribosyl)glycinamide + ADP + phosphate + H(+). It participates in purine metabolism; IMP biosynthesis via de novo pathway; N(2)-formyl-N(1)-(5-phospho-D-ribosyl)glycinamide from N(1)-(5-phospho-D-ribosyl)glycinamide (formate route): step 1/1. In terms of biological role, involved in the de novo purine biosynthesis. Catalyzes the transfer of formate to 5-phospho-ribosyl-glycinamide (GAR), producing 5-phospho-ribosyl-N-formylglycinamide (FGAR). Formate is provided by PurU via hydrolysis of 10-formyl-tetrahydrofolate. The protein is Formate-dependent phosphoribosylglycinamide formyltransferase of Pseudomonas putida (strain ATCC 47054 / DSM 6125 / CFBP 8728 / NCIMB 11950 / KT2440).